A 268-amino-acid chain; its full sequence is Imidazole glycerol phosphate synthase subunit HisF (268 aa).

Catalysis depends on residues Asp12 and Asp131.

Belongs to the HisA/HisF family. Heterodimer of HisH and HisF.

It localises to the cytoplasm. The enzyme catalyses 5-[(5-phospho-1-deoxy-D-ribulos-1-ylimino)methylamino]-1-(5-phospho-beta-D-ribosyl)imidazole-4-carboxamide + L-glutamine = D-erythro-1-(imidazol-4-yl)glycerol 3-phosphate + 5-amino-1-(5-phospho-beta-D-ribosyl)imidazole-4-carboxamide + L-glutamate + H(+). Its pathway is amino-acid biosynthesis; L-histidine biosynthesis; L-histidine from 5-phospho-alpha-D-ribose 1-diphosphate: step 5/9. In terms of biological role, IGPS catalyzes the conversion of PRFAR and glutamine to IGP, AICAR and glutamate. The HisF subunit catalyzes the cyclization activity that produces IGP and AICAR from PRFAR using the ammonia provided by the HisH subunit. In Salinibacter ruber (strain DSM 13855 / M31), this protein is Imidazole glycerol phosphate synthase subunit HisF.